The sequence spans 428 residues: Glucose-1-phosphate adenylyltransferase (428 aa).

Alpha-D-glucose 1-phosphate-binding positions include Tyr114, Gly179, 194–195 (EK), and Ser212.

It belongs to the bacterial/plant glucose-1-phosphate adenylyltransferase family. As to quaternary structure, homotetramer.

The catalysed reaction is alpha-D-glucose 1-phosphate + ATP + H(+) = ADP-alpha-D-glucose + diphosphate. It functions in the pathway glycan biosynthesis; glycogen biosynthesis. Its function is as follows. Involved in the biosynthesis of ADP-glucose, a building block required for the elongation reactions to produce glycogen. Catalyzes the reaction between ATP and alpha-D-glucose 1-phosphate (G1P) to produce pyrophosphate and ADP-Glc. This chain is Glucose-1-phosphate adenylyltransferase, found in Yersinia pseudotuberculosis serotype O:1b (strain IP 31758).